A 782-amino-acid chain; its full sequence is uncharacterized protein (782 aa).

2 disordered regions span residues 1–25 and 175–195; these read MFSP…STTS and RPRT…EDLR. Residues 13 to 25 show a composition bias toward low complexity; the sequence is ESESVSNCESTTS. Residues 183–195 are compositionally biased toward basic and acidic residues; that stretch reads RAGDASMSREDLR. Coiled coils occupy residues 223 to 331, 348 to 398, 428 to 601, and 699 to 743; these read RENR…STLN, LSQF…VSTL, NRIN…QLLN, and TIET…IIAK. The segment at 748–782 is disordered; sequence NIPKTEKSSPMKKVPPIENFRAKSQTSITGLSPVL. Positions 769 to 782 are enriched in polar residues; that stretch reads AKSQTSITGLSPVL.

This is an uncharacterized protein from Caenorhabditis elegans.